Reading from the N-terminus, the 167-residue chain is Ion-translocating oxidoreductase complex subunit B (167 aa).

The hydrophobic stretch occupies residues Met1–Ala22. The 60-residue stretch at Gln28–Ile87 folds into the 4Fe-4S domain. Positions 45, 48, 53, 70, 113, 116, 119, 123, 143, 146, 149, and 153 each coordinate [4Fe-4S] cluster. 2 consecutive 4Fe-4S ferredoxin-type domains span residues Asn104–Asn133 and Phe134–Glu163.

It belongs to the 4Fe4S bacterial-type ferredoxin family. RnfB subfamily. As to quaternary structure, the complex is composed of six subunits: RnfA, RnfB, RnfC, RnfD, RnfE and RnfG. The cofactor is [4Fe-4S] cluster.

The protein localises to the cell inner membrane. Its function is as follows. Part of a membrane-bound complex that couples electron transfer with translocation of ions across the membrane. This chain is Ion-translocating oxidoreductase complex subunit B, found in Buchnera aphidicola subsp. Acyrthosiphon pisum (strain 5A).